Here is a 156-residue protein sequence, read N- to C-terminus: Small ribosomal subunit protein uS7 (156 aa).

The protein belongs to the universal ribosomal protein uS7 family. In terms of assembly, part of the 30S ribosomal subunit. Contacts proteins S9 and S11.

In terms of biological role, one of the primary rRNA binding proteins, it binds directly to 16S rRNA where it nucleates assembly of the head domain of the 30S subunit. Is located at the subunit interface close to the decoding center, probably blocks exit of the E-site tRNA. This chain is Small ribosomal subunit protein uS7, found in Paracoccus denitrificans (strain Pd 1222).